Here is a 247-residue protein sequence, read N- to C-terminus: ATP synthase subunit a, chloroplastic (247 aa).

5 helical membrane passes run 38–58, 95–115, 134–154, 199–219, and 220–240; these read QVLI…TLAV, VPFI…GALL, INTT…AGIS, LVVV…VMFL, and GLFT…AYIG.

This sequence belongs to the ATPase A chain family. F-type ATPases have 2 components, CF(1) - the catalytic core - and CF(0) - the membrane proton channel. CF(1) has five subunits: alpha(3), beta(3), gamma(1), delta(1), epsilon(1). CF(0) has four main subunits: a, b, b' and c.

The protein localises to the plastid. Its subcellular location is the chloroplast thylakoid membrane. Key component of the proton channel; it plays a direct role in the translocation of protons across the membrane. In Daucus carota (Wild carrot), this protein is ATP synthase subunit a, chloroplastic.